An 872-amino-acid chain; its full sequence is MTDTSSSISRKSLRADSYQPQLIEEKWQNEWKISGLYKTREPKEDQKTFYALSMFPYPSGNLHMGHVRNYVITDVIARVHRMKGFSVLHPMGWDAFGLPAENAAIERNIQPDIWTEKNISHMRSQLDRLGLSIDWDREQTTSKSEYYKWTQSIFLKLYEAGLAYQKSATVNWDPVDKTVLANEQVDADGKSWRSGALVEKKQLKQWFLKITDYAEILLKDIDTLTEWPERVKTMQSNWIGKSVGVKINFQLLTKEKENLSVFTTRPDTLFGSTYLVLSPEDKLVDKLVDPKLINDLSNFRDYVSKLSDKERTAEGKPKNGMAIGAYAINPINQEKLPIWIADYVLSGYGTGAVMGVPAHDQRDLDFAQKYSLPIKYVIKPSGIIEKKKEVKAYSEVGVMINSGPFNGQKSDEVKSLITEKGIKENWAEKKTTYKLRDWLISRQRYWGCPIPIVHCAKCGIVPIEKENLPVFLPTNIQLSGKGNSPLKDNEWTKTQCPICKGIARRESDTMDTFICSSWYYLRFIDPNNKKNIIDKNLADRWMPVDQYVGGIEHAILHLLYARFITKVLRDKDMISIDEPFKKLLTQGMVQGITFKNPKTGKYIPPNKINNIKTPLDPSTGESLELIYEKMSKSKHNGIDPSTVIDKYGADTARMFILFKAPPEKDLEWDDADVEGQYRFLQRLWRLINESKTYNKLSLDSNENNNLNNLNQDEISLRRSVHLAIKEISNDLNEGNQFNTAISELMKLSNNMNELLGKCRISVVNESLSILIRILSPFAPHLAEEAWSTLKGKGSVHEQKWPEFDPNALKQDNYQLVIQMNGKVRGSIKIASETNKQEIEKIALNSDIAKKWLIDGSYKKVIVVLGKLVNIVY.

Residues 56 to 66 carry the 'HIGH' region motif; it reads PYPSGNLHMGH. The 'KMSKS' region signature appears at 629 to 633; sequence KMSKS. ATP is bound at residue lysine 632.

Belongs to the class-I aminoacyl-tRNA synthetase family.

It localises to the cytoplasm. It carries out the reaction tRNA(Leu) + L-leucine + ATP = L-leucyl-tRNA(Leu) + AMP + diphosphate. The chain is Leucine--tRNA ligase from Prochlorococcus marinus (strain MIT 9211).